We begin with the raw amino-acid sequence, 164 residues long: Mediator of RNA polymerase II transcription subunit 21 (164 aa).

The disordered stretch occupies residues 49-81; it reads APLPANQTQQGSTLGSNRQTVSPSTQAEAESNF. The span at 53-81 shows a compositional bias: polar residues; sequence ANQTQQGSTLGSNRQTVSPSTQAEAESNF. Residues 114 to 146 adopt a coiled-coil conformation; sequence ESQLKIIDDLSKELQSVEQEQVKKIQEKDKLLK.

This sequence belongs to the Mediator complex subunit 21 family. Component of the Mediator complex.

Its subcellular location is the nucleus. Its function is as follows. Component of the Mediator complex, a coactivator involved in the regulated transcription of nearly all RNA polymerase II-dependent genes. Mediator functions as a bridge to convey information from gene-specific regulatory proteins to the basal RNA polymerase II transcription machinery. Mediator is recruited to promoters by direct interactions with regulatory proteins and serves as a scaffold for the assembly of a functional preinitiation complex with RNA polymerase II and the general transcription factors. This chain is Mediator of RNA polymerase II transcription subunit 21 (SRB7), found in Scheffersomyces stipitis (strain ATCC 58785 / CBS 6054 / NBRC 10063 / NRRL Y-11545) (Yeast).